The chain runs to 602 residues: UvrABC system protein C (602 aa).

In terms of domain architecture, GIY-YIG spans 17–94; sequence TTSGCYKMYS…IKEYKPDYNI (78 aa). The UVR domain maps to 199 to 234; sequence SKLLDETEIKMKEAIKKEDFEAAIKLKETKRSLIEI.

It belongs to the UvrC family. Interacts with UvrB in an incision complex.

It localises to the cytoplasm. The UvrABC repair system catalyzes the recognition and processing of DNA lesions. UvrC both incises the 5' and 3' sides of the lesion. The N-terminal half is responsible for the 3' incision and the C-terminal half is responsible for the 5' incision. The protein is UvrABC system protein C of Borrelia hermsii (strain HS1 / DAH).